The sequence spans 1012 residues: AP-2 complex subunit alpha-1 (1012 aa).

4 HEAT repeats span residues 254-289 (AMRALQYFPTIEDPSTRKALFEVLQRILMGTDVVKN), 354-391 (DIIKKHQSQIITSLKDPDISIRRRALDLLYGMCDVSNA), 393-430 (DIVEELLQYLSTAEFSMREELSLKAAILAEKFAPDLSW), and 525-565 (PTIP…CIDV). The tract at residues 652-678 (STDPESVARSLSHPNGTLSNIDPQTPS) is disordered. Residues 663-675 (SHPNGTLSNIDPQ) are compositionally biased toward polar residues. In terms of domain architecture, GAE spans 742-841 (ALCLKDSGVL…LDFSYKFGAN (100 aa)).

This sequence belongs to the adaptor complexes large subunit family. In terms of assembly, adaptor protein complex 2 (AP-2) is a heterotetramer composed of two large adaptins (alpha-type and beta-type subunits), a medium adaptin (mu-type subunit) and a small adaptin (sigma-type subunit). Binds to EPSIN2.

It localises to the membrane. The protein resides in the coated pit. Its function is as follows. Subunit of the adaptor protein complex 2 (AP-2). Adaptor protein complexes function in protein transport via transport vesicles in different membrane traffic pathways. Adaptor protein complexes are vesicle coat components and appear to be involved in cargo selection and vesicle formation. AP-2 is involved in clathrin-dependent endocytosis in which cargo proteins are incorporated into vesicles surrounded by clathrin (clathrin-coated vesicles, CCVs) which are destined for fusion with the early endosome. The complex binds polyphosphoinositides. This is AP-2 complex subunit alpha-1 (ALPHA-ADR) from Arabidopsis thaliana (Mouse-ear cress).